Reading from the N-terminus, the 98-residue chain is NADH-ubiquinone oxidoreductase chain 4L (98 aa).

The next 3 helical transmembrane spans lie at 2 to 22, 29 to 49, and 61 to 81; these read PSIS…MLIF, SLLC…LTIL, and ILLL…LVTV.

The protein belongs to the complex I subunit 4L family. Core subunit of respiratory chain NADH dehydrogenase (Complex I) which is composed of 45 different subunits.

Its subcellular location is the mitochondrion inner membrane. The catalysed reaction is a ubiquinone + NADH + 5 H(+)(in) = a ubiquinol + NAD(+) + 4 H(+)(out). Its function is as follows. Core subunit of the mitochondrial membrane respiratory chain NADH dehydrogenase (Complex I) which catalyzes electron transfer from NADH through the respiratory chain, using ubiquinone as an electron acceptor. Part of the enzyme membrane arm which is embedded in the lipid bilayer and involved in proton translocation. The sequence is that of NADH-ubiquinone oxidoreductase chain 4L (MT-ND4L) from Eulemur coronatus (Crowned lemur).